The primary structure comprises 403 residues: F-box/LRR-repeat protein At1g06630 (403 aa).

The F-box domain occupies 11 to 59 (RDAINWLPDEILGKILSLLATKQAVSTSVLSKKWRTLFKLVDTLEFDDS). LRR repeat units follow at residues 239 to 262 (LPNLEYLDYSDYALYGYPQVNLES) and 288 to 312 (IRNVEILSLSPDSVGVIYSCCKYGL).

In Arabidopsis thaliana (Mouse-ear cress), this protein is F-box/LRR-repeat protein At1g06630.